The chain runs to 123 residues: Molluscan insulin-related peptide 1 (123 aa).

The N-terminal stretch at 1–31 is a signal peptide; it reads MAGVRLVFTKAFMVTVLLTLLLNIGVKPAEG. Position 32 is a pyrrolidone carboxylic acid (Q32). 3 disulfide bridges follow: C48/C109, C60/C122, and C108/C113. A propeptide spanning residues 68–69 is cleaved from the precursor; that stretch reads MV. Q99 is subject to Pyrrolidone carboxylic acid.

The protein belongs to the insulin family. In terms of assembly, heterodimer of a B chain and an A chain linked by two disulfide bonds. In terms of tissue distribution, expressed in the cerebral light-green cells which are giant neuroendocrines cells involved in the control of growth.

The protein resides in the cytoplasmic vesicle. It localises to the secretory vesicle. The protein is Molluscan insulin-related peptide 1 of Lymnaea stagnalis (Great pond snail).